Consider the following 100-residue polypeptide: Large ribosomal subunit protein uL23 (100 aa).

It belongs to the universal ribosomal protein uL23 family. In terms of assembly, part of the 50S ribosomal subunit. Contacts protein L29, and trigger factor when it is bound to the ribosome.

One of the early assembly proteins it binds 23S rRNA. One of the proteins that surrounds the polypeptide exit tunnel on the outside of the ribosome. Forms the main docking site for trigger factor binding to the ribosome. This Mycolicibacterium paratuberculosis (strain ATCC BAA-968 / K-10) (Mycobacterium paratuberculosis) protein is Large ribosomal subunit protein uL23.